Reading from the N-terminus, the 122-residue chain is Large ribosomal subunit protein uL14 (122 aa).

This sequence belongs to the universal ribosomal protein uL14 family. As to quaternary structure, part of the 50S ribosomal subunit. Forms a cluster with proteins L3 and L19. In the 70S ribosome, L14 and L19 interact and together make contacts with the 16S rRNA in bridges B5 and B8.

Functionally, binds to 23S rRNA. Forms part of two intersubunit bridges in the 70S ribosome. This chain is Large ribosomal subunit protein uL14, found in Shewanella denitrificans (strain OS217 / ATCC BAA-1090 / DSM 15013).